A 527-amino-acid chain; its full sequence is MNFYSLLPSRHDVSADNITEKFCQFCLCCNPWYAGADTRQLANAFNMIPKSEGQKFEIWVLFLLVRQYHQKIINSWSKLVGFLGVERKDEQSTQKIQQYVVRLKRWMSQTHVDAFFDYLLNKPNPYYLEIPETQPQVRCNVNVTDDLVIKSLRAGLMSHPDVNSSSISTMRTSTSPSNWIHSASASLDDNTHNLGSFVTNPHADSQECPTPQSLLMRASHHMSERGSQQAHQTTPQNHSLPHPPNMFEPPDEDHQLPSAANNSHNHDHAFQTAEAVGVADSIDPDWHQWPDDLRDVSSPKESDGLNDSWSRQTNQVETENVENEAGVPRKRGRPPGARNKIKRLRSEPSVSLTLSISWYERFEKLMHAQNTMLRSAFSHVARLPMETVSQLLSHYTETISQYLPPSETSPIPKTPNFKFISSTLLALVSSHSEILEASTDRLIWTVHQGPLTATICHAFNLEKAPSMHSLAEAQMIPDVPISHSNSMEPLDTVSSLKLEIAKLNAALKEKNLELENLKRKIMNAVFD.

Disordered regions lie at residues 160 to 184 (PDVN…HSAS), 219 to 265 (SHHM…NSHN), and 282 to 344 (IDPD…IKRL). Residues 164–177 (SSSISTMRTSTSPS) show a composition bias toward low complexity. A compositionally biased stretch (polar residues) spans 225–239 (RGSQQAHQTTPQNHS). Over residues 284-303 (PDWHQWPDDLRDVSSPKESD) the composition is skewed to basic and acidic residues. Phosphoserine is present on residues Ser297, Ser298, and Ser302. Residues 328–343 (PRKRGRPPGARNKIKR) show a composition bias toward basic residues.

Its subcellular location is the nucleus. Binds, preferentially, to the Maundrell ARS consensus sequence within ARS3002. This is ARS-binding protein 2 (abp2) from Schizosaccharomyces pombe (strain 972 / ATCC 24843) (Fission yeast).